Here is a 383-residue protein sequence, read N- to C-terminus: Acetylornithine deacetylase (383 aa).

Residue His-80 participates in Zn(2+) binding. Residue Asp-82 is part of the active site. Asp-112 lines the Zn(2+) pocket. Glu-144 is a catalytic residue. Zn(2+) contacts are provided by Glu-145, Glu-169, and His-355.

The protein belongs to the peptidase M20A family. ArgE subfamily. Homodimer. Requires Zn(2+) as cofactor. Co(2+) is required as a cofactor. It depends on glutathione as a cofactor.

Its subcellular location is the cytoplasm. The catalysed reaction is N(2)-acetyl-L-ornithine + H2O = L-ornithine + acetate. It participates in amino-acid biosynthesis; L-arginine biosynthesis; L-ornithine from N(2)-acetyl-L-ornithine (linear): step 1/1. Functionally, catalyzes the hydrolysis of the amide bond of N(2)-acetylated L-amino acids. Cleaves the acetyl group from N-acetyl-L-ornithine to form L-ornithine, an intermediate in L-arginine biosynthesis pathway, and a branchpoint in the synthesis of polyamines. The chain is Acetylornithine deacetylase from Escherichia coli O45:K1 (strain S88 / ExPEC).